The sequence spans 335 residues: Eukaryotic translation initiation factor 3 subunit I (335 aa).

WD repeat units lie at residues Gly8–Thr47, Gly50–Asp91, Cys145–Asn184, Glu189–Thr228, and Gly286–Met325.

The protein belongs to the eIF-3 subunit I family. Component of the eukaryotic translation initiation factor 3 (eIF-3) complex.

Its subcellular location is the cytoplasm. Its function is as follows. Component of the eukaryotic translation initiation factor 3 (eIF-3) complex, which is involved in protein synthesis of a specialized repertoire of mRNAs and, together with other initiation factors, stimulates binding of mRNA and methionyl-tRNAi to the 40S ribosome. The eIF-3 complex specifically targets and initiates translation of a subset of mRNAs involved in cell proliferation. The polypeptide is Eukaryotic translation initiation factor 3 subunit I (tif34) (Aspergillus oryzae (strain ATCC 42149 / RIB 40) (Yellow koji mold)).